The sequence spans 144 residues: uncharacterized protein (144 aa).

A compositionally biased stretch (basic residues) spans 124 to 133 (KALNRKKSKT). The interval 124 to 144 (KALNRKKSKTKNGEKNGEGKS) is disordered. The segment covering 134–144 (KNGEKNGEGKS) has biased composition (basic and acidic residues).

This is an uncharacterized protein from Acidianus filamentous virus 1 (isolate United States/Yellowstone) (AFV-1).